We begin with the raw amino-acid sequence, 155 residues long: Small ribosomal subunit protein uS7c (155 aa).

It belongs to the universal ribosomal protein uS7 family. In terms of assembly, part of the 30S ribosomal subunit.

It is found in the plastid. The protein localises to the chloroplast. One of the primary rRNA binding proteins, it binds directly to 16S rRNA where it nucleates assembly of the head domain of the 30S subunit. This chain is Small ribosomal subunit protein uS7c (rps7), found in Pinus koraiensis (Korean pine).